Reading from the N-terminus, the 472-residue chain is 2-methylcitrate synthase, mitochondrial (472 aa).

A mitochondrion-targeting transit peptide spans 1–29 (MALNLTTSRRALGSLKPLTRAAFVGARGY). CoA is bound by residues Arg75 and Lys193. Residue His271 participates in oxaloacetate binding. Leu306 contacts CoA. Residue His307 is part of the active site. Positions 348, 350, and 351 each coordinate CoA. The oxaloacetate site is built by His353 and Arg362. Residue His353 is part of the active site. The CoA site is built by Thr402, Lys403, and Asn408. The active site involves Asp410. The oxaloacetate site is built by Arg436 and Arg456.

It belongs to the citrate synthase family. In terms of assembly, homodimer.

It is found in the mitochondrion matrix. The enzyme catalyses propanoyl-CoA + oxaloacetate + H2O = (2S,3S)-2-methylcitrate + CoA + H(+). It catalyses the reaction oxaloacetate + acetyl-CoA + H2O = citrate + CoA + H(+). It functions in the pathway organic acid metabolism; propanoate degradation. Component of the methylcitrate cycle that catalyzes the synthesis of (2S,3S)-2-methylcitrate from propionyl-CoA and oxaloacetate. Plays an important role in detoxification of propionyl-CoA, an inhibitor of both primary and secondary metabolism. Also has citrate synthase activity using as substrates acetyl-CoA and oxaloacetate. The sequence is that of 2-methylcitrate synthase, mitochondrial from Fusarium solani (Filamentous fungus).